The primary structure comprises 492 residues: Fibroblast growth factor receptor substrate 3 (492 aa).

Glycine 2 is lipidated: N-myristoyl glycine. Positions 13 to 115 (VPHNHPTKFK…QCNSINVTEE (103 aa)) constitute an IRS-type PTB domain. Disordered regions lie at residues 125–205 (PQEL…EDRR), 337–413 (QQLR…EPPR), and 425–492 (WGTA…DLPL). Polar residues-rich tracts occupy residues 133-147 (GSSQ…SFSN) and 166-185 (PSTS…QTLI). Residues 374–385 (TSTRASARSHSS) show a composition bias toward low complexity.

In terms of assembly, binds NTRK1, FGFR1, NGFR, GRB2, PTPN11 and ERK2. Post-translationally, phosphorylated on tyrosine residues upon stimulation by BFGF or NGFB.

The protein localises to the membrane. In terms of biological role, adapter protein that links FGF and NGF receptors to downstream signaling pathways. Involved in the activation of MAP kinases. Down-regulates ERK2 signaling by interfering with the phosphorylation and nuclear translocation of ERK2. The protein is Fibroblast growth factor receptor substrate 3 (Frs3) of Rattus norvegicus (Rat).